The chain runs to 90 residues: U7-theraphotoxin-Hhn1i (90 aa).

The N-terminal stretch at 1–19 (MKTAIFTVVLALAVFAVLS) is a signal peptide. Residues 20 to 50 (FGWEANEKALSEEFTELIHEKEAASETEARE) constitute a propeptide that is removed on maturation. 3 disulfide bridges follow: Cys51-Cys65, Cys58-Cys70, and Cys64-Cys81.

It belongs to the neurotoxin 10 (Hwtx-1) family. 13 (Hntx-13) subfamily. As to expression, expressed by the venom gland.

Its subcellular location is the secreted. Ion channel inhibitor. This is U7-theraphotoxin-Hhn1i from Cyriopagopus hainanus (Chinese bird spider).